The following is a 36-amino-acid chain: Conotoxin Cal6.1h (36 aa).

Residues 1 to 7 constitute a propeptide that is removed on maturation; the sequence is GLGRPSR. Cystine bridges form between Cys-9/Cys-25, Cys-16/Cys-29, and Cys-24/Cys-34.

The protein belongs to the conotoxin O1 superfamily. In terms of tissue distribution, expressed by the venom duct.

Its subcellular location is the secreted. Its function is as follows. Probable neurotoxin with unknown target. Possibly targets ion channels. The sequence is that of Conotoxin Cal6.1h from Californiconus californicus (California cone).